A 179-amino-acid polypeptide reads, in one-letter code: UPF0302 protein BPUM_1989 (179 aa).

The protein belongs to the UPF0302 family.

The chain is UPF0302 protein BPUM_1989 from Bacillus pumilus (strain SAFR-032).